The primary structure comprises 220 residues: Ribose-5-phosphate isomerase A (220 aa).

Substrate is bound by residues 28 to 31 (TGST), 81 to 84 (DGAD), and 94 to 97 (KGGG). Glu103 functions as the Proton acceptor in the catalytic mechanism. Residue Lys121 coordinates substrate.

The protein belongs to the ribose 5-phosphate isomerase family. As to quaternary structure, homodimer.

The enzyme catalyses aldehydo-D-ribose 5-phosphate = D-ribulose 5-phosphate. The protein operates within carbohydrate degradation; pentose phosphate pathway; D-ribose 5-phosphate from D-ribulose 5-phosphate (non-oxidative stage): step 1/1. In terms of biological role, catalyzes the reversible conversion of ribose-5-phosphate to ribulose 5-phosphate. This chain is Ribose-5-phosphate isomerase A, found in Vesicomyosocius okutanii subsp. Calyptogena okutanii (strain HA).